Here is a 317-residue protein sequence, read N- to C-terminus: MGGVIKSIFTFVLIVEFIIGNLGNSFIALVNCIDWVKGRKISSVDRILTALAISRISLVWLIFGSWCVSVFFPALFATEKMFRMLTNIWTVINHFSVWLATGLGTFYFLKIANFSNSIFLYLKWRVKKVVLVLLLVTSVFLFLNIALINIHINASINGYRRNKTCSSDSSNFTRFSSLIVLTSTVFIFIPFTLSLAMFLLLIFSMWKHRKKMQHTVKISGDASTKAHRGVKSVITFFLLYAIFSLSFFISVWTSERLEENLIILSQVMGMAYPSCHSCVLILGNKKLRQASLSVLLWLRYMFKDGEPSGHKEFRESS.

The Extracellular portion of the chain corresponds to 1-7 (MGGVIKS). The helical transmembrane segment at 8 to 28 (IFTFVLIVEFIIGNLGNSFIA) threads the bilayer. The Cytoplasmic segment spans residues 29 to 55 (LVNCIDWVKGRKISSVDRILTALAISR). A helical transmembrane segment spans residues 56 to 76 (ISLVWLIFGSWCVSVFFPALF). The Extracellular portion of the chain corresponds to 77–87 (ATEKMFRMLTN). Residues threonine 86 and tryptophan 89 each coordinate cholesterol. A helical transmembrane segment spans residues 88–108 (IWTVINHFSVWLATGLGTFYF). Residues 109–129 (LKIANFSNSIFLYLKWRVKKV) lie on the Cytoplasmic side of the membrane. Residues 130–150 (VLVLLLVTSVFLFLNIALINI) traverse the membrane as a helical segment. The Extracellular portion of the chain corresponds to 151-184 (HINASINGYRRNKTCSSDSSNFTRFSSLIVLTST). N-linked (GlcNAc...) asparagine glycosylation is found at asparagine 153, asparagine 162, and asparagine 171. Valine 180 is a cholesterol binding site. Residues 185–205 (VFIFIPFTLSLAMFLLLIFSM) form a helical membrane-spanning segment. Residues 206-232 (WKHRKKMQHTVKISGDASTKAHRGVKS) lie on the Cytoplasmic side of the membrane. Residues 233–253 (VITFFLLYAIFSLSFFISVWT) traverse the membrane as a helical segment. Over 254-261 (SERLEENL) the chain is Extracellular. Residues 262–282 (IILSQVMGMAYPSCHSCVLIL) form a helical membrane-spanning segment. Residues serine 265 and methionine 268 each coordinate cholesterol. Residues 283–317 (GNKKLRQASLSVLLWLRYMFKDGEPSGHKEFRESS) lie on the Cytoplasmic side of the membrane.

Belongs to the G-protein coupled receptor T2R family. In terms of assembly, core component of the TAS2R14-GNAI1 complex, consisting of TAS2R14, GNAI1, GNB1 and GNG2; within the complex interacts with GNAI1. Core component of the TAS2R14-GNAT3 complex, consisting of TAS2R14, GNAT3, GNB1 and GNG2; within the complex interacts with GNAT3. Core component of the TAS2R14-GNAS2 complex, consisting of TAS2R14, GNAS2, GNB1 and GNG2; within the complex interacts with GNAS2. Highly expressed in cerebellum, pancreas, small intestine and thymus; also expressed in adipose, aorta, skin and tongue, but at significantly lower levels. Expressed in subsets of taste receptor cells of the tongue and palate epithelium and exclusively in gustducin-positive cells. Expressed in testis.

It is found in the membrane. The catalysed reaction is Ca(2+)(in) = Ca(2+)(out). The enzyme catalyses 3',5'-cyclic AMP(in) = 3',5'-cyclic AMP(out). With respect to regulation, basal activity is enhanced by binding to bitter tastants, such as flufenamic acid and aristolochic acid. Regulated by cholesterol in a concentration-dependent manner. Its function is as follows. Gustducin-linked G-protein coupled receptor that plays a role in the perception of bitterness. The activity of this receptor stimulates GNAT3, activating the gustducin G-protein pathway. Likely plays a role in sensing the chemical composition of the gastrointestinal content and other extra-oral tissues via the inhibitory G-protein pathways. This Homo sapiens (Human) protein is Taste receptor type 2 member 14 (TAS2R14).